The following is a 217-amino-acid chain: Protein GrpE (217 aa).

This sequence belongs to the GrpE family. As to quaternary structure, homodimer.

Its subcellular location is the cytoplasm. Its function is as follows. Participates actively in the response to hyperosmotic and heat shock by preventing the aggregation of stress-denatured proteins, in association with DnaK and GrpE. It is the nucleotide exchange factor for DnaK and may function as a thermosensor. Unfolded proteins bind initially to DnaJ; upon interaction with the DnaJ-bound protein, DnaK hydrolyzes its bound ATP, resulting in the formation of a stable complex. GrpE releases ADP from DnaK; ATP binding to DnaK triggers the release of the substrate protein, thus completing the reaction cycle. Several rounds of ATP-dependent interactions between DnaJ, DnaK and GrpE are required for fully efficient folding. The polypeptide is Protein GrpE (Mycoplasma pneumoniae (strain ATCC 29342 / M129 / Subtype 1) (Mycoplasmoides pneumoniae)).